The chain runs to 228 residues: uncharacterized protein (228 aa).

Residues 11-78 (PPVNQQIYRI…PQRGSYVNKI (68 aa)) form the HTH gntR-type domain. A DNA-binding region (H-T-H motif) is located at residues 38–57 (EKEVSVRFNVSRQPVREAFI).

This is an uncharacterized protein from Escherichia coli O6:H1 (strain CFT073 / ATCC 700928 / UPEC).